A 407-amino-acid chain; its full sequence is Arrestin red cell isoform 1 (407 aa).

Belongs to the arrestin family.

It is found in the cytoplasm. This is Arrestin red cell isoform 1 from Oncorhynchus mykiss (Rainbow trout).